The following is a 272-amino-acid chain: Dermonecrotic toxin StSicTox-betaIF1 (272 aa).

The active site involves histidine 5. The Mg(2+) site is built by glutamate 25 and aspartate 27. The active-site Nucleophile is the histidine 41. 2 disulfide bridges follow: cysteine 45-cysteine 51 and cysteine 47-cysteine 189. Residue aspartate 85 coordinates Mg(2+).

Belongs to the arthropod phospholipase D family. Class II subfamily. Mg(2+) serves as cofactor. Expressed by the venom gland.

The protein resides in the secreted. It carries out the reaction an N-(acyl)-sphingosylphosphocholine = an N-(acyl)-sphingosyl-1,3-cyclic phosphate + choline. The enzyme catalyses an N-(acyl)-sphingosylphosphoethanolamine = an N-(acyl)-sphingosyl-1,3-cyclic phosphate + ethanolamine. The catalysed reaction is a 1-acyl-sn-glycero-3-phosphocholine = a 1-acyl-sn-glycero-2,3-cyclic phosphate + choline. It catalyses the reaction a 1-acyl-sn-glycero-3-phosphoethanolamine = a 1-acyl-sn-glycero-2,3-cyclic phosphate + ethanolamine. Its function is as follows. Dermonecrotic toxins cleave the phosphodiester linkage between the phosphate and headgroup of certain phospholipids (sphingolipid and lysolipid substrates), forming an alcohol (often choline) and a cyclic phosphate. This toxin acts on sphingomyelin (SM). It may also act on ceramide phosphoethanolamine (CPE), lysophosphatidylcholine (LPC) and lysophosphatidylethanolamine (LPE), but not on lysophosphatidylserine (LPS), and lysophosphatidylglycerol (LPG). It acts by transphosphatidylation, releasing exclusively cyclic phosphate products as second products. Induces dermonecrosis, hemolysis, increased vascular permeability, edema, inflammatory response, and platelet aggregation. The polypeptide is Dermonecrotic toxin StSicTox-betaIF1 (Sicarius terrosus (Cave spider)).